Here is a 445-residue protein sequence, read N- to C-terminus: Elongation factor 1-alpha (445 aa).

In terms of domain architecture, tr-type G spans 5–230 (KVHISLVVIG…DNLEPPKRPS (226 aa)). Residues 14–21 (GHVDSGKS) are G1. 14–21 (GHVDSGKS) serves as a coordination point for GTP. Lysine 55 carries the post-translational modification N6,N6-dimethyllysine. The G2 stretch occupies residues 70-74 (CITID). Lysine 79 carries the post-translational modification N6,N6,N6-trimethyllysine. The interval 91–94 (DAPG) is G3. Residues 91–95 (DAPGH) and 153–156 (NKFD) contribute to the GTP site. Residues 153-156 (NKFD) form a G4 region. Lysine 187 is subject to N6,N6,N6-trimethyllysine. The G5 stretch occupies residues 194–196 (SGW). Residue lysine 261 is modified to N6-methyllysine. N6,N6,N6-trimethyllysine is present on residues lysine 306 and lysine 396.

Belongs to the TRAFAC class translation factor GTPase superfamily. Classic translation factor GTPase family. EF-Tu/EF-1A subfamily.

The protein resides in the cytoplasm. In terms of biological role, this protein promotes the GTP-dependent binding of aminoacyl-tRNA to the A-site of ribosomes during protein biosynthesis. The polypeptide is Elongation factor 1-alpha (TEF) (Euglena gracilis).